The sequence spans 153 residues: Myoglobin (153 aa).

Residues 1 to 147 (MATACVKSLE…FSDECLDHLK (147 aa)) form the Globin domain. H94 is a heme b binding site.

The protein belongs to the globin family. As to quaternary structure, homodimer; disulfide-linked. Post-translationally, the N-terminus is blocked. As to expression, body wall globin is localized in cellular compartments belonging to the hypodermis, the dorsal, ventral and lateral cords, the nerve ring, and body wall muscle.

It is found in the cytoplasm. High oxygen affinity. Probably supplies oxygen needed for muscle activity. The polypeptide is Myoglobin (Ascaris suum (Pig roundworm)).